Here is a 705-residue protein sequence, read N- to C-terminus: Ribosomal RNA large subunit methyltransferase K/L (705 aa).

In terms of domain architecture, THUMP spans 43–154 (LLYQSLLWSR…RDTASVALDL (112 aa)).

Belongs to the methyltransferase superfamily. RlmKL family.

It is found in the cytoplasm. It carries out the reaction guanosine(2445) in 23S rRNA + S-adenosyl-L-methionine = N(2)-methylguanosine(2445) in 23S rRNA + S-adenosyl-L-homocysteine + H(+). It catalyses the reaction guanosine(2069) in 23S rRNA + S-adenosyl-L-methionine = N(2)-methylguanosine(2069) in 23S rRNA + S-adenosyl-L-homocysteine + H(+). Specifically methylates the guanine in position 2445 (m2G2445) and the guanine in position 2069 (m7G2069) of 23S rRNA. In Pectobacterium atrosepticum (strain SCRI 1043 / ATCC BAA-672) (Erwinia carotovora subsp. atroseptica), this protein is Ribosomal RNA large subunit methyltransferase K/L.